We begin with the raw amino-acid sequence, 156 residues long: Protein-export protein SecB (156 aa).

The protein belongs to the SecB family. In terms of assembly, homotetramer, a dimer of dimers. One homotetramer interacts with 1 SecA dimer.

It localises to the cytoplasm. Functionally, one of the proteins required for the normal export of preproteins out of the cell cytoplasm. It is a molecular chaperone that binds to a subset of precursor proteins, maintaining them in a translocation-competent state. It also specifically binds to its receptor SecA. The sequence is that of Protein-export protein SecB from Desulfotalea psychrophila (strain LSv54 / DSM 12343).